The following is a 433-amino-acid chain: Histidine--tRNA ligase (433 aa).

Belongs to the class-II aminoacyl-tRNA synthetase family. As to quaternary structure, homodimer.

Its subcellular location is the cytoplasm. It catalyses the reaction tRNA(His) + L-histidine + ATP = L-histidyl-tRNA(His) + AMP + diphosphate + H(+). In Azoarcus sp. (strain BH72), this protein is Histidine--tRNA ligase.